The following is a 200-amino-acid chain: TATA-box-binding protein 2 (200 aa).

A run of 2 repeats spans residues 25-101 and 115-192.

This sequence belongs to the TBP family. Belongs to the TFIID complex together with the TBP-associated factors (TAFs). Binds DNA as monomer. Interacts with TAF1 (via N-terminus). Interacts with TFIIB1. Interacts with PTF2. Interacts with HAT5/ATHB-1 and ATHB-7. Component of a nuclear protein complex containing at least TATA binding proteins (TBPs, e.g. TBP1 and TBP2) and ATX1.

It is found in the nucleus. General transcription factor (GTF) that functions at the core of the DNA-binding multiprotein factor TFIID. Binding of TFIID to the TATA box is the initial transcriptional step of the pre-initiation complex (PIC), playing a role in the activation of eukaryotic genes transcribed by RNA polymerase II. Interacts with TFIIB1 and is required for activated transcription and possibly basal transcription. May act as GTF of RNA polymerase I-dependent transcription and rRNA synthesis. Forms a ternary complex with PBRP1 and the rDNA promoter region. This chain is TATA-box-binding protein 2, found in Arabidopsis thaliana (Mouse-ear cress).